A 448-amino-acid chain; its full sequence is Phosphoglucosamine mutase (448 aa).

The active-site Phosphoserine intermediate is the Ser-100. Ser-100, Asp-240, Asp-242, and Asp-244 together coordinate Mg(2+). Ser-100 carries the phosphoserine modification.

The protein belongs to the phosphohexose mutase family. Mg(2+) is required as a cofactor. Activated by phosphorylation.

It catalyses the reaction alpha-D-glucosamine 1-phosphate = D-glucosamine 6-phosphate. Functionally, catalyzes the conversion of glucosamine-6-phosphate to glucosamine-1-phosphate. The chain is Phosphoglucosamine mutase from Bacillus cytotoxicus (strain DSM 22905 / CIP 110041 / 391-98 / NVH 391-98).